Here is a 448-residue protein sequence, read N- to C-terminus: Fiber protein (448 aa).

It belongs to the adenoviridae fiber family. Homotrimer. Interacts (via N-terminal tail region) with pentons.

The protein resides in the virion. The protein localises to the host nucleus. In terms of biological role, forms spikes that protrude from each vertex of the icosahedral capsid. Interacts with host receptor to provide virion initial attachment to target cell. Fiber proteins are shed during virus entry, when virus is still at the cell surface. The sequence is that of Fiber protein from Sus scrofa (Pig).